A 91-amino-acid polypeptide reads, in one-letter code: ATP synthase subunit c (91 aa).

Helical transmembrane passes span 4-24 (FTMC…GTGI) and 53-73 (IGLA…LIIL).

This sequence belongs to the ATPase C chain family. In terms of assembly, F-type ATPases have 2 components, F(1) - the catalytic core - and F(0) - the membrane proton channel. F(1) has five subunits: alpha(3), beta(3), gamma(1), delta(1), epsilon(1). F(0) has three main subunits: a(1), b(2) and c(10-14). The alpha and beta chains form an alternating ring which encloses part of the gamma chain. F(1) is attached to F(0) by a central stalk formed by the gamma and epsilon chains, while a peripheral stalk is formed by the delta and b chains.

The protein localises to the cell inner membrane. Functionally, f(1)F(0) ATP synthase produces ATP from ADP in the presence of a proton or sodium gradient. F-type ATPases consist of two structural domains, F(1) containing the extramembraneous catalytic core and F(0) containing the membrane proton channel, linked together by a central stalk and a peripheral stalk. During catalysis, ATP synthesis in the catalytic domain of F(1) is coupled via a rotary mechanism of the central stalk subunits to proton translocation. Its function is as follows. Key component of the F(0) channel; it plays a direct role in translocation across the membrane. A homomeric c-ring of between 10-14 subunits forms the central stalk rotor element with the F(1) delta and epsilon subunits. In Geotalea daltonii (strain DSM 22248 / JCM 15807 / FRC-32) (Geobacter daltonii), this protein is ATP synthase subunit c.